The primary structure comprises 123 residues: UPF0212 protein rrnAC0441 (123 aa).

Belongs to the UPF0212 family.

The chain is UPF0212 protein rrnAC0441 from Haloarcula marismortui (strain ATCC 43049 / DSM 3752 / JCM 8966 / VKM B-1809) (Halobacterium marismortui).